A 312-amino-acid polypeptide reads, in one-letter code: Acetylglutamate kinase (312 aa).

Substrate-binding positions include 74–75 (GG), Arg96, and Asn195.

It belongs to the acetylglutamate kinase family. ArgB subfamily.

Its subcellular location is the cytoplasm. It carries out the reaction N-acetyl-L-glutamate + ATP = N-acetyl-L-glutamyl 5-phosphate + ADP. It participates in amino-acid biosynthesis; L-arginine biosynthesis; N(2)-acetyl-L-ornithine from L-glutamate: step 2/4. Catalyzes the ATP-dependent phosphorylation of N-acetyl-L-glutamate. The protein is Acetylglutamate kinase of Nocardioides sp. (strain ATCC BAA-499 / JS614).